Reading from the N-terminus, the 81-residue chain is Toxin-like peptide AaF1CA5 (81 aa).

Positions 1-22 are cleaved as a signal peptide; that stretch reads MMKLMLFSIIVILFSLIGSIHG. Residues 25–81 enclose the LCN-type CS-alpha/beta domain; the sequence is VPGNYPLDSSDDTYLCAPLGENPFCIKICRKHGVKYGLMLRLPCWCEYFGKIKNVKI. 2 disulfide bridges follow: Cys49–Cys68 and Cys53–Cys70.

Belongs to the long (3 C-C) scorpion toxin superfamily. In terms of tissue distribution, expressed by the venom gland.

It is found in the secreted. Probable neurotoxin that inhibits ion channels. The chain is Toxin-like peptide AaF1CA5 from Androctonus australis (Sahara scorpion).